We begin with the raw amino-acid sequence, 219 residues long: Deoxyribose-phosphate aldolase 1 (219 aa).

D87 acts as the Proton donor/acceptor in catalysis. The active-site Schiff-base intermediate with acetaldehyde is the K149. K178 functions as the Proton donor/acceptor in the catalytic mechanism.

Belongs to the DeoC/FbaB aldolase family. DeoC type 1 subfamily.

It is found in the cytoplasm. It carries out the reaction 2-deoxy-D-ribose 5-phosphate = D-glyceraldehyde 3-phosphate + acetaldehyde. Its pathway is carbohydrate degradation; 2-deoxy-D-ribose 1-phosphate degradation; D-glyceraldehyde 3-phosphate and acetaldehyde from 2-deoxy-alpha-D-ribose 1-phosphate: step 2/2. Functionally, catalyzes a reversible aldol reaction between acetaldehyde and D-glyceraldehyde 3-phosphate to generate 2-deoxy-D-ribose 5-phosphate. This is Deoxyribose-phosphate aldolase 1 from Vibrio vulnificus (strain YJ016).